A 351-amino-acid polypeptide reads, in one-letter code: Peptide chain release factor 1 (351 aa).

Gln-229 is subject to N5-methylglutamine.

It belongs to the prokaryotic/mitochondrial release factor family. In terms of processing, methylated by PrmC. Methylation increases the termination efficiency of RF1.

It is found in the cytoplasm. Peptide chain release factor 1 directs the termination of translation in response to the peptide chain termination codons UAG and UAA. This chain is Peptide chain release factor 1, found in Cereibacter sphaeroides (strain ATCC 17023 / DSM 158 / JCM 6121 / CCUG 31486 / LMG 2827 / NBRC 12203 / NCIMB 8253 / ATH 2.4.1.) (Rhodobacter sphaeroides).